Here is a 1446-residue protein sequence, read N- to C-terminus: Sister chromatid cohesion protein PDS5 homolog B (1446 aa).

The stretch at 383–419 (LLVNDHLLNFVRERTLDKRWRVRKEAMMGLAQIYKKY) is one HEAT repeat. Residue K1136 is modified to N6-acetyllysine. Polar residues predominate over residues 1137 to 1155 (PLSSAGKQSQTKSSRMETV). The tract at residues 1137 to 1446 (PLSSAGKQSQ…RRRSSKRERR (310 aa)) is disordered. S1140, S1162, S1166, S1176, S1182, and S1191 each carry phosphoserine. Over residues 1156-1167 (SNASSSSNPSSP) the composition is skewed to low complexity. Basic and acidic residues predominate over residues 1172 to 1184 (GRLDSSEMDHSEN). Basic and acidic residues-rich tracts occupy residues 1196–1212 (KKSD…LEKP) and 1223–1241 (PEEK…EQKP). Residues 1243 to 1252 (GSQRGRKRGR) show a composition bias toward basic residues. The a.T hook 1 DNA-binding region spans 1247-1259 (GRKRGRTASDSDE). T1253 carries the post-translational modification Phosphothreonine. Residues S1255 and S1257 each carry the phosphoserine modification. The segment covering 1263-1272 (PEEKRHKEEL) has biased composition (basic and acidic residues). At S1281 the chain carries Phosphoserine. Residues 1285–1297 (KGKRGRPPKPLGG) constitute a DNA-binding region (a.T hook 2). Basic residues-rich tracts occupy residues 1308 to 1317 (TSKKGNKKKL) and 1339 to 1351 (SKSK…KRAQ). A compositionally biased stretch (polar residues) spans 1353–1370 (RAESPETSAVESTQSTPQ). 2 positions are modified to phosphoserine: S1356 and S1364. T1365 carries the phosphothreonine modification. S1367 is subject to Phosphoserine. A Phosphothreonine modification is found at T1368. Residues 1370-1382 (QKGRGRPSKAPSP) constitute a DNA-binding region (a.T hook 3). 3 positions are modified to phosphoserine: S1381, S1415, and S1418. Acidic residues predominate over residues 1421 to 1431 (TTQEGAEEEDI). The span at 1436 to 1446 (VRRRSSKRERR) shows a compositional bias: basic residues.

It belongs to the PDS5 family. In terms of assembly, interacts with the cohesin complex. Interacts with RAD21; the interaction is direct. Interacts with WAPL (via FGF motifs) or CDCA5 (via the FGF motif); the interaction is direct, cohesin-dependent and competitive. Expressed in prostate.

Its subcellular location is the nucleus. Its function is as follows. Regulator of sister chromatid cohesion in mitosis which may stabilize cohesin complex association with chromatin. May couple sister chromatid cohesion during mitosis to DNA replication. Cohesion ensures that chromosome partitioning is accurate in both meiotic and mitotic cells and plays an important role in DNA repair. Plays a role in androgen-induced proliferative arrest in prostate cells. In Mus musculus (Mouse), this protein is Sister chromatid cohesion protein PDS5 homolog B (Pds5b).